The following is a 1122-amino-acid chain: Adhesin P1 (1122 aa).

Residues 1-26 (MKKLIFKLSVGITPLALIGLGSFGLA) form the signal peptide. Disordered regions lie at residues 182-208 (ATGD…GGGA), 244-273 (DYNS…GGRT), and 541-562 (GALQ…SNGN). The segment covering 195–208 (AGGGSSSSAAGGGA) has biased composition (gly residues). Positions 259–273 (LDSSESSESINGGRT) are enriched in polar residues. A helical transmembrane segment spans residues 1001 to 1021 (AISIPIIIIALALALGLGIGI). Positions 1066 to 1122 (KTPQMLQANKKDGASSPSKPSAPAAKKPAGPTKPSAPGAKPTAPAKPKAPAPTKKIE) are disordered. Positions 1079–1122 (ASSPSKPSAPAAKKPAGPTKPSAPGAKPTAPAKPKAPAPTKKIE) are enriched in low complexity.

This sequence belongs to the adhesin P1 family.

It localises to the cell membrane. Could be involved in cytadherence. The chain is Adhesin P1 (gapA) from Mycoplasmoides gallisepticum (strain R(low / passage 15 / clone 2)) (Mycoplasma gallisepticum).